A 732-amino-acid polypeptide reads, in one-letter code: Aldehyde oxidoreductase molybdenum-binding subunit PaoC (732 aa).

Mo-molybdopterin cytosine dinucleotide contacts are provided by residues 241-242, 468-470, 511-512, 615-621, Gln-625, and 688-691; these read GF, IGT, GA, RILNPKT, and KGVG. Glu-692 acts as the Proton acceptor in catalysis.

The protein belongs to the xanthine dehydrogenase family. As to quaternary structure, heterotrimer composed of PaoA, PaoB and PaoC. Mo-molybdopterin cytosine dinucleotide is required as a cofactor.

Its subcellular location is the periplasm. It carries out the reaction an aldehyde + A + H2O = a carboxylate + AH2 + H(+). With respect to regulation, the complex requires PaoD for activity. Functionally, oxidizes aldehydes to the corresponding carboxylic acids with a preference for aromatic aldehydes. It might play a role in the detoxification of aldehydes to avoid cell damage. The sequence is that of Aldehyde oxidoreductase molybdenum-binding subunit PaoC from Escherichia coli (strain K12).